A 216-amino-acid chain; its full sequence is Cytidylate kinase (216 aa).

7-15 (GPSGTGKST) provides a ligand contact to ATP.

Belongs to the cytidylate kinase family. Type 1 subfamily.

Its subcellular location is the cytoplasm. It carries out the reaction CMP + ATP = CDP + ADP. It catalyses the reaction dCMP + ATP = dCDP + ADP. The protein is Cytidylate kinase of Chlamydia trachomatis serovar A (strain ATCC VR-571B / DSM 19440 / HAR-13).